Reading from the N-terminus, the 780-residue chain is Alpha-xylosidase (780 aa).

N-linked (GlcNAc...) asparagine glycans are attached at residues asparagine 48, asparagine 84, asparagine 247, and asparagine 298. Catalysis depends on residues aspartate 434 and glutamate 437. A glycan (N-linked (GlcNAc...) asparagine) is linked at asparagine 443. Aspartate 501 acts as the Proton donor in catalysis. Asparagine 718 is a glycosylation site (N-linked (GlcNAc...) asparagine).

This sequence belongs to the glycosyl hydrolase 31 family.

The protein localises to the secreted. The catalysed reaction is Hydrolysis of terminal, non-reducing alpha-D-xylose residues with release of alpha-D-xylose.. In terms of biological role, catalyzes the liberation of alpha-xylose from the non-reducing terminal glucose of xyloglucan oligosaccharides. This Emericella nidulans (strain FGSC A4 / ATCC 38163 / CBS 112.46 / NRRL 194 / M139) (Aspergillus nidulans) protein is Alpha-xylosidase.